A 256-amino-acid polypeptide reads, in one-letter code: Glutamate racemase (256 aa).

Residues 12 to 13 (DS) and 44 to 45 (YG) each bind substrate. The Proton donor/acceptor role is filled by C75. 76–77 (NT) contributes to the substrate binding site. C186 acts as the Proton donor/acceptor in catalysis. 187-188 (TH) is a substrate binding site.

This sequence belongs to the aspartate/glutamate racemases family.

It catalyses the reaction L-glutamate = D-glutamate. It functions in the pathway cell wall biogenesis; peptidoglycan biosynthesis. Functionally, provides the (R)-glutamate required for cell wall biosynthesis. This is Glutamate racemase from Clostridium acetobutylicum (strain ATCC 824 / DSM 792 / JCM 1419 / IAM 19013 / LMG 5710 / NBRC 13948 / NRRL B-527 / VKM B-1787 / 2291 / W).